Consider the following 173-residue polypeptide: ATP synthase subunit beta, mitochondrial (173 aa).

The protein belongs to the ATPase alpha/beta chains family. In terms of assembly, F-type ATPases have 2 components, CF(1) - the catalytic core - and CF(0) - the membrane proton channel. CF(1) has five subunits: alpha(3), beta(3), gamma(1), delta(1), epsilon(1). CF(0) has three main subunits: a, b and c.

It is found in the mitochondrion. The protein resides in the mitochondrion inner membrane. The catalysed reaction is ATP + H2O + 4 H(+)(in) = ADP + phosphate + 5 H(+)(out). Its function is as follows. Mitochondrial membrane ATP synthase (F(1)F(0) ATP synthase or Complex V) produces ATP from ADP in the presence of a proton gradient across the membrane which is generated by electron transport complexes of the respiratory chain. F-type ATPases consist of two structural domains, F(1) - containing the extramembraneous catalytic core and F(0) - containing the membrane proton channel, linked together by a central stalk and a peripheral stalk. During catalysis, ATP synthesis in the catalytic domain of F(1) is coupled via a rotary mechanism of the central stalk subunits to proton translocation. Subunits alpha and beta form the catalytic core in F(1). Rotation of the central stalk against the surrounding alpha(3)beta(3) subunits leads to hydrolysis of ATP in three separate catalytic sites on the beta subunits. The protein is ATP synthase subunit beta, mitochondrial (ATPB) of Actinidia deliciosa (Kiwi).